The chain runs to 43 residues: Photosystem II reaction center protein K (43 aa).

Residues 1–6 constitute a propeptide that is removed on maturation; it reads MSLLLA. Residues 18 to 38 form a helical membrane-spanning segment; sequence IVDVLPIIPVLFLLLAFVWQA.

This sequence belongs to the PsbK family. PSII is composed of 1 copy each of membrane proteins PsbA, PsbB, PsbC, PsbD, PsbE, PsbF, PsbH, PsbI, PsbJ, PsbK, PsbL, PsbM, PsbT, PsbX, PsbY, PsbZ, Psb30/Ycf12, at least 3 peripheral proteins of the oxygen-evolving complex and a large number of cofactors. It forms dimeric complexes.

It is found in the plastid. Its subcellular location is the chloroplast thylakoid membrane. Its function is as follows. One of the components of the core complex of photosystem II (PSII). PSII is a light-driven water:plastoquinone oxidoreductase that uses light energy to abstract electrons from H(2)O, generating O(2) and a proton gradient subsequently used for ATP formation. It consists of a core antenna complex that captures photons, and an electron transfer chain that converts photonic excitation into a charge separation. This chain is Photosystem II reaction center protein K, found in Oltmannsiellopsis viridis (Marine flagellate).